The sequence spans 483 residues: Regulatory protein ViaA (483 aa).

This sequence belongs to the ViaA family. As to quaternary structure, homodimer. Interacts with RavA.

It localises to the cytoplasm. Its function is as follows. Component of the RavA-ViaA chaperone complex, which may act on the membrane to optimize the function of some of the respiratory chains. ViaA stimulates the ATPase activity of RavA. This is Regulatory protein ViaA from Shigella flexneri serotype 5b (strain 8401).